We begin with the raw amino-acid sequence, 379 residues long: Alcohol dehydrogenase class-2 isozyme 2 (379 aa).

Zn(2+) contacts are provided by Cys47, His69, Cys99, Cys102, Cys105, Cys113, and Cys176. NAD(+) is bound by residues 205-210 (GLGGVG), Asp229, Lys234, 298-300 (VGV), and Arg374.

The protein belongs to the zinc-containing alcohol dehydrogenase family. Class-II subfamily. Homodimer. Zn(2+) serves as cofactor.

The protein resides in the cytoplasm. It carries out the reaction a primary alcohol + NAD(+) = an aldehyde + NADH + H(+). The catalysed reaction is a secondary alcohol + NAD(+) = a ketone + NADH + H(+). This Oryctolagus cuniculus (Rabbit) protein is Alcohol dehydrogenase class-2 isozyme 2 (ADH2-2).